The chain runs to 262 residues: Hydroxyethylthiazole kinase (262 aa).

Met-44 serves as a coordination point for substrate. Positions 118 and 166 each coordinate ATP. Residue Gly-193 coordinates substrate.

The protein belongs to the Thz kinase family. The cofactor is Mg(2+).

The catalysed reaction is 5-(2-hydroxyethyl)-4-methylthiazole + ATP = 4-methyl-5-(2-phosphooxyethyl)-thiazole + ADP + H(+). It participates in cofactor biosynthesis; thiamine diphosphate biosynthesis; 4-methyl-5-(2-phosphoethyl)-thiazole from 5-(2-hydroxyethyl)-4-methylthiazole: step 1/1. Its function is as follows. Catalyzes the phosphorylation of the hydroxyl group of 4-methyl-5-beta-hydroxyethylthiazole (THZ). This chain is Hydroxyethylthiazole kinase, found in Chlamydia abortus (strain DSM 27085 / S26/3) (Chlamydophila abortus).